A 637-amino-acid polypeptide reads, in one-letter code: 1-deoxy-D-xylulose-5-phosphate synthase (637 aa).

Residues H76 and 117 to 119 each bind thiamine diphosphate; that span reads GHS. D148 contributes to the Mg(2+) binding site. Residues 149-150, N177, Y294, and E381 each bind thiamine diphosphate; that span reads GA. N177 serves as a coordination point for Mg(2+).

Belongs to the transketolase family. DXPS subfamily. Homodimer. It depends on Mg(2+) as a cofactor. Thiamine diphosphate serves as cofactor.

The catalysed reaction is D-glyceraldehyde 3-phosphate + pyruvate + H(+) = 1-deoxy-D-xylulose 5-phosphate + CO2. The protein operates within metabolic intermediate biosynthesis; 1-deoxy-D-xylulose 5-phosphate biosynthesis; 1-deoxy-D-xylulose 5-phosphate from D-glyceraldehyde 3-phosphate and pyruvate: step 1/1. Catalyzes the acyloin condensation reaction between C atoms 2 and 3 of pyruvate and glyceraldehyde 3-phosphate to yield 1-deoxy-D-xylulose-5-phosphate (DXP). The protein is 1-deoxy-D-xylulose-5-phosphate synthase of Neisseria meningitidis serogroup B (strain ATCC BAA-335 / MC58).